Consider the following 528-residue polypeptide: Coiled-coil domain-containing protein 116 (528 aa).

The disordered stretch occupies residues 43–68 (GHVPHPPSTCGSSALQNQRRNKRHPQ). The span at 51–60 (TCGSSALQNQ) shows a compositional bias: polar residues. Residues 81–104 (HVLDSLETVVEKATERMAAMKTEA) are a coiled coil. 2 disordered regions span residues 335-444 (PLFP…RQRA) and 497-528 (SSSP…THHS). Residues 363 to 378 (PTNSGQPHPTVSSPKT) show a composition bias toward polar residues. Ser389 bears the Phosphoserine mark. Over residues 419 to 429 (HSREKEPDSDP) the composition is skewed to basic and acidic residues. Positions 434-443 (PPVSLSSRQR) are enriched in polar residues. The segment covering 497 to 510 (SSSPSSLCPEVTSS) has biased composition (low complexity).

Its subcellular location is the cytoplasm. It localises to the cytoskeleton. The protein resides in the microtubule organizing center. The protein localises to the centrosome. This is Coiled-coil domain-containing protein 116 (CCDC116) from Macaca fascicularis (Crab-eating macaque).